We begin with the raw amino-acid sequence, 250 residues long: MKSRYLLFFLPLIVAKYTSAATMQPFHSPEESVNSQFYLPPPPGNDDPAFRYDKEAYFKGYAIKGSPRWKQAAEDADISVENIARIFSPVVGAKINPKDTPETWNMLQNLLKMGGYYATASAKKYYMRTRPFVLFNHSTCRPEDENTLRKDGSYPSGHTAYSTLLALVLSQARPERAQELARRGWEFGQSRVICGAHWQSDVDAGRYVGAVEFARLQTIPAFQKSLAKVREELNDKNNLLSKEERPELNY.

Positions 1–20 (MKSRYLLFFLPLIVAKYTSA) are cleaved as a signal peptide.

The protein belongs to the class A bacterial acid phosphatase family. Homodimer.

The protein resides in the periplasm. The catalysed reaction is a phosphate monoester + H2O = an alcohol + phosphate. The sequence is that of Non-specific acid phosphatase (phoN) from Salmonella typhi.